Reading from the N-terminus, the 197-residue chain is Large ribosomal subunit protein bL25 (197 aa).

It belongs to the bacterial ribosomal protein bL25 family. CTC subfamily. As to quaternary structure, part of the 50S ribosomal subunit; part of the 5S rRNA/L5/L18/L25 subcomplex. Contacts the 5S rRNA. Binds to the 5S rRNA independently of L5 and L18.

In terms of biological role, this is one of the proteins that binds to the 5S RNA in the ribosome where it forms part of the central protuberance. The protein is Large ribosomal subunit protein bL25 of Caulobacter vibrioides (strain ATCC 19089 / CIP 103742 / CB 15) (Caulobacter crescentus).